A 309-amino-acid polypeptide reads, in one-letter code: Golgi to ER traffic protein 4 homolog (309 aa).

Positions 290–309 (SGGGLASMEVDGPTIEDEMD) are disordered.

It belongs to the GET4 family.

May play a role in insertion of tail-anchored proteins into the endoplasmic reticulum membrane. This chain is Golgi to ER traffic protein 4 homolog, found in Dictyostelium discoideum (Social amoeba).